Here is a 1405-residue protein sequence, read N- to C-terminus: Sterol 3-beta-glucosyltransferase (1405 aa).

Basic and acidic residues-rich tracts occupy residues 1–16 and 95–105; these read MRPF…DRKL and TGQRPRKESSV. Disordered stretches follow at residues 1-27, 83-186, and 203-230; these read MRPF…SASR, ARFD…SATP, and DLKA…ASVS. Over residues 106–115 the composition is skewed to polar residues; it reads RKGTSVSVNT. Positions 116-126 are enriched in low complexity; sequence SSLDPSQRSSS. The span at 206–218 shows a compositional bias: polar residues; sequence ASSTERSQSSLNE. Positions 246–285 constitute a GRAM 1 domain; it reads EKVLVEYACSLLQSMLLQGYMYVTEGHICFYAYLPKKSTV. The region spanning 285–384 is the PH domain; sequence VAIKSGYLHK…WVKALQKVIF (100 aa). 2 disordered regions span residues 461–526 and 566–642; these read SQHL…DSSD and TIYG…SGAP. Residues 483–493 are compositionally biased toward polar residues; that stretch reads RWSLTSGTSRA. Residues 570–589 show a composition bias toward basic and acidic residues; the sequence is LDRRPSGRERRGRRNSDETA. Over residues 590–603 the composition is skewed to polar residues; sequence RSPSTRVNVGTGQQ. Basic and acidic residues predominate over residues 606-624; the sequence is ELDRRTDGNTSGREARDTT. A compositionally biased stretch (polar residues) spans 626 to 642; it reads ESDQYTQDPTKSFSGAP. A GRAM 2 domain is found at 724 to 790; it reads DRFRAHFALP…RDIENVEKEK (67 aa). Positions 911, 912, 914, 1214, 1216, 1229, 1233, 1234, 1253, and 1254 each coordinate UDP-alpha-D-glucose. The interval 1330-1367 is disordered; sequence SIASSTPFSPTPSAKTAAEQDADDDVEDSEEWTFVGDD. Over residues 1332 to 1348 the composition is skewed to low complexity; sequence ASSTPFSPTPSAKTAAE. Residues 1349–1367 are compositionally biased toward acidic residues; that stretch reads QDADDDVEDSEEWTFVGDD.

This sequence belongs to the glycosyltransferase 28 family.

The protein resides in the cytoplasm. Its subcellular location is the preautophagosomal structure membrane. The enzyme catalyses a sterol + UDP-alpha-D-glucose = a sterol 3-beta-D-glucoside + UDP + H(+). It carries out the reaction ergosterol + UDP-alpha-D-glucose = ergosteryl 3-beta-D-glucoside + UDP + H(+). In terms of biological role, sterol glycosyltransferase responsible for the glycosylation of ergosterol to form ergosterol-glucoside. The protein is Sterol 3-beta-glucosyltransferase of Aspergillus fumigatus (strain ATCC MYA-4609 / CBS 101355 / FGSC A1100 / Af293) (Neosartorya fumigata).